The sequence spans 397 residues: ATP-dependent RNA helicase eIF4A (397 aa).

The Q motif signature appears at 23–51; sequence YKFDDLNLKPNIVRGIFGYGYETPSAIQQ. The region spanning 54-224 is the Helicase ATP-binding domain; sequence ILPITEGRDV…TKFMNNPVRI (171 aa). 67 to 74 provides a ligand contact to ATP; sequence AQSGTGKT. Positions 172 to 175 match the DEAD box motif; sequence DEAD. Residues 235 to 396 enclose the Helicase C-terminal domain; that stretch reads GIKQFYINVE…EMPADIGALF (162 aa).

Belongs to the DEAD box helicase family. eIF4A subfamily. Component of the eIF4F complex, which composition varies with external and internal environmental conditions. It is composed of at least eIF4A, eIF4E and eIF4G.

It localises to the cytoplasm. It catalyses the reaction ATP + H2O = ADP + phosphate + H(+). Functionally, ATP-dependent RNA helicase which is a subunit of the eIF4F complex involved in cap recognition and is required for mRNA binding to ribosome. In the current model of translation initiation, eIF4A unwinds RNA secondary structures in the 5'-UTR of mRNAs which is necessary to allow efficient binding of the small ribosomal subunit, and subsequent scanning for the initiator codon. The protein is ATP-dependent RNA helicase eIF4A (TIF1) of Candida albicans (strain SC5314 / ATCC MYA-2876) (Yeast).